Here is a 1042-residue protein sequence, read N- to C-terminus: Sarcoplasmic/endoplasmic reticulum calcium ATPase 2 (1042 aa).

Over 1–48 (MENAHTKTVEEVLGHFGVNESTGLSLEQVKKLKERWGSNELPAEEGKT) the chain is Cytoplasmic. S38 bears the Phosphoserine mark. A helical transmembrane segment spans residues 49–69 (LLELVIEQFEDLLVRILLLAA). Topologically, residues 70 to 89 (CISFVLAWFEEGEETITAFV) are lumenal. Residues 90 to 110 (EPFVILLILVANAIVGVWQER) form a helical membrane-spanning segment. Topologically, residues 111 to 253 (NAENAIEALK…QERTPLQQKL (143 aa)) are cytoplasmic. A helical transmembrane segment spans residues 254–273 (DEFGEQLSKVISLICIAVWI). Residues 274–295 (INIGHFNDPVHGGSWIRGAIYY) lie on the Lumenal side of the membrane. Residues Y294 and Y295 each carry the 3'-nitrotyrosine modification. Residues 296-313 (FKIAVALAVAAIPEGLPA) traverse the membrane as a helical segment. Positions 304, 305, 307, and 309 each coordinate Ca(2+). Over 314 to 756 (VITTCLALGT…EEGRAIYNNM (443 aa)) the chain is Cytoplasmic. D351 (4-aspartylphosphate intermediate) is an active-site residue. Positions 351 and 353 each coordinate Mg(2+). T353 lines the ATP pocket. T441 carries the phosphothreonine modification. Residues E442, R489, and K514 each coordinate ATP. The residue at position 531 (S531) is a Phosphoserine. R559 is an ATP binding site. Positions 575 to 594 (MHLKDSANFIKYETNLTFVG) are interaction with HAX1. S580 carries the post-translational modification Phosphoserine. T624, G625, and D626 together coordinate ATP. At S663 the chain carries Phosphoserine. Residues R677 and K683 each contribute to the ATP site. D702 contacts Mg(2+). N705 provides a ligand contact to ATP. The helical transmembrane segment at 757 to 776 (KQFIRYLISSNVGEVVCIFL) threads the bilayer. Residues N767 and E770 each coordinate Ca(2+). Residues 777–786 (TAALGFPEAL) lie on the Lumenal side of the membrane. A helical membrane pass occupies residues 787–807 (IPVQLLWVNLVTDGLPATALG). An interaction with PLN region spans residues 787 to 807 (IPVQLLWVNLVTDGLPATALG). The segment at 788-1042 (PVQLLWVNLV…DTNFSDLLWS (255 aa)) is interaction with TMEM64 and PDIA3. Positions 795, 798, and 799 each coordinate Ca(2+). The Cytoplasmic segment spans residues 808-827 (FNPPDLDIMNKPPRNPKEPL). Residues 828–850 (ISGWLFFRYLAIGCYVGAATVGA) traverse the membrane as a helical segment. Residues 851 to 896 (AAWWFIAADGGPRVSFYQLSHFLQCKEDNPDFEGVDCAIFESPYPM) lie on the Lumenal side of the membrane. A disulfide bridge connects residues C875 and C887. A helical membrane pass occupies residues 897-916 (TMALSVLVTIEMCNALNSLS). E907 lines the Ca(2+) pocket. Topologically, residues 917 to 929 (ENQSLLRMPPWEN) are cytoplasmic. Residues 930–948 (IWLVGSICLSMSLHFLILY) form a helical membrane-spanning segment. An interaction with PLN region spans residues 931-942 (WLVGSICLSMSL). Residues 949–963 (VEPLPLIFQITPLNV) lie on the Lumenal side of the membrane. The chain crosses the membrane as a helical span at residues 964–984 (TQWLMVLKISLPVILMDETLK). The Cytoplasmic portion of the chain corresponds to 985 to 1042 (FVARNYLEPGKECVQPAPQSCSLWACTEGVSWPFVLLIVPLVMWVYSTDTNFSDLLWS).

The protein belongs to the cation transport ATPase (P-type) (TC 3.A.3) family. Type IIA subfamily. Interacts with sarcolipin (SLN); the interaction inhibits ATP2A2 Ca(2+) affinity. Interacts with phospholamban (PLN); the interaction inhibits ATP2A2 Ca(2+) affinity. Interacts with myoregulin (MRLN). Interacts with ARLN and ERLN; the interactions inhibit ATP2A2 Ca(2+) affinity. Interacts with SRTIT1/DWORF; the interaction results in activation of ATP2A2. Interacts with the monomeric forms of SLN, PLN, ARLN, ERLN and STRI1/DWORF. Interacts with HAX1. Interacts with S100A8 and S100A9. Interacts with SLC35G1 and STIM1. Interacts with TMEM203. Interacts with TMEM64 and PDIA3. Interacts with TMX1. Interacts with TMX2. Interacts with VMP1; VMP1 competes with PLN and SLN to prevent them from forming an inhibitory complex with ATP2A2. Interacts with ULK1. Interacts with TUNAR. Interacts with FLVCR2; this interaction occurs in the absence of heme and promotes ATP2A2 proteasomal degradation; this complex is dissociated upon heme binding. Interacts with FNIP1. As to quaternary structure, interacts with TRAM2 (via C-terminus). Requires Mg(2+) as cofactor. In terms of processing, nitrated under oxidative stress. Nitration on the two tyrosine residues inhibits catalytic activity. Serotonylated on Gln residues by TGM2 in response to hypoxia, leading to its inactivation. Isoform 2 is highly expressed in heart and slow twitch skeletal muscle. Isoform 1 is widely expressed.

It is found in the endoplasmic reticulum membrane. The protein resides in the sarcoplasmic reticulum membrane. It carries out the reaction Ca(2+)(in) + ATP + H2O = Ca(2+)(out) + ADP + phosphate + H(+). Has different conformational states with differential Ca2+ affinity. The E1 conformational state (active form) shows high Ca(2+) affinity, while the E2 state exhibits low Ca(2+) affinity. Binding of ATP allosterically increases its affinity for subsequent binding of Ca2+. Reversibly inhibited by phospholamban (PLN) at low calcium concentrations. PLN inhibits ATP2A2 Ca(2+) affinity by disrupting its allosteric activation by ATP. Inhibited by sarcolipin (SLN) and myoregulin (MRLN). The inhibition is blocked by VMP1. Enhanced by STRIT1/DWORF; STRIT1 increases activity by displacing sarcolipin (SLN), phospholamban (PLN) and myoregulin (MRLN). Stabilizes SERCA2 in its E2 state. Its function is as follows. This magnesium-dependent enzyme catalyzes the hydrolysis of ATP coupled with the translocation of calcium from the cytosol to the sarcoplasmic reticulum lumen. Involved in autophagy in response to starvation. Upon interaction with VMP1 and activation, controls ER-isolation membrane contacts for autophagosome formation. Also modulates ER contacts with lipid droplets, mitochondria and endosomes. In coordination with FLVCR2 mediates heme-stimulated switching from mitochondrial ATP synthesis to thermogenesis. Involved in the regulation of the contraction/relaxation cycle. Acts as a regulator of TNFSF11-mediated Ca(2+) signaling pathways via its interaction with TMEM64 which is critical for the TNFSF11-induced CREB1 activation and mitochondrial ROS generation necessary for proper osteoclast generation. Association between TMEM64 and SERCA2 in the ER leads to cytosolic Ca(2+) spiking for activation of NFATC1 and production of mitochondrial ROS, thereby triggering Ca(2+) signaling cascades that promote osteoclast differentiation and activation. In Oryctolagus cuniculus (Rabbit), this protein is Sarcoplasmic/endoplasmic reticulum calcium ATPase 2 (ATP2A2).